The primary structure comprises 149 residues: MHCPFCGTQDTKVIDSRLVADGASVRRRRECNHCKERFTTFETAELVMPRVIKTDGSREPFNEDKLRNGLLRALEKRPVSLELMEQAINKIKSSIRATGEREISSNFVGSLVMENLKQIDKVAYVRFASVYRSFEDIREFGEEIARLND.

The segment at 3–34 is a zinc-finger region; it reads CPFCGTQDTKVIDSRLVADGASVRRRRECNHC. Residues 49-139 form the ATP-cone domain; it reads PRVIKTDGSR…VYRSFEDIRE (91 aa).

Belongs to the NrdR family. The cofactor is Zn(2+).

In terms of biological role, negatively regulates transcription of bacterial ribonucleotide reductase nrd genes and operons by binding to NrdR-boxes. The chain is Transcriptional repressor NrdR from Idiomarina loihiensis (strain ATCC BAA-735 / DSM 15497 / L2-TR).